A 195-amino-acid chain; its full sequence is UPF0157 protein BH1888 (195 aa).

The segment covering 1–12 (MPPMKDSSNSTP) has biased composition (polar residues). Residues 1–21 (MPPMKDSSNSTPRTDEELQEV) are disordered.

The protein belongs to the UPF0157 (GrpB) family.

The polypeptide is UPF0157 protein BH1888 (Halalkalibacterium halodurans (strain ATCC BAA-125 / DSM 18197 / FERM 7344 / JCM 9153 / C-125) (Bacillus halodurans)).